The sequence spans 99 residues: Protein RnfH (99 aa).

This sequence belongs to the UPF0125 (RnfH) family.

This is Protein RnfH from Tolumonas auensis (strain DSM 9187 / NBRC 110442 / TA 4).